The following is a 90-amino-acid chain: Conotoxin ba9a (90 aa).

Positions 1–27 (MHLSLARSAGLMWLLLFAVGNFVGVQP) are cleaved as a signal peptide. Positions 28-62 (GQITRDVDNGQLADNRRNLQSLRKPMTLFKSLNKR) are excised as a propeptide. Glu67 is modified (4-carboxyglutamate). 2 positions are modified to 4-hydroxyproline: Pro76 and Pro80.

As to expression, expressed by the venom duct.

The protein localises to the secreted. This Conus bayani (Bayan's cone) protein is Conotoxin ba9a.